We begin with the raw amino-acid sequence, 628 residues long: Chaperone protein DnaK (628 aa).

Thr-197 is modified (phosphothreonine; by autocatalysis). A disordered region spans residues 597–628 (EQMYKGEQGAQGGAADTSKKKSDDDVIDAEIE).

The protein belongs to the heat shock protein 70 family.

Acts as a chaperone. In Sulfurimonas denitrificans (strain ATCC 33889 / DSM 1251) (Thiomicrospira denitrificans (strain ATCC 33889 / DSM 1251)), this protein is Chaperone protein DnaK.